The primary structure comprises 449 residues: Phosphoglucosamine mutase (449 aa).

S101 functions as the Phosphoserine intermediate in the catalytic mechanism. Mg(2+) is bound by residues S101, D242, D244, and D246. S101 carries the post-translational modification Phosphoserine.

Belongs to the phosphohexose mutase family. The cofactor is Mg(2+). In terms of processing, activated by phosphorylation.

The catalysed reaction is alpha-D-glucosamine 1-phosphate = D-glucosamine 6-phosphate. In terms of biological role, catalyzes the conversion of glucosamine-6-phosphate to glucosamine-1-phosphate. This Hyphomonas neptunium (strain ATCC 15444) protein is Phosphoglucosamine mutase.